The sequence spans 383 residues: Glutamyl-tRNA reductase (383 aa).

Residues Thr-38–Arg-41, Ser-82, Glu-87–Gln-89, and Gln-93 each bind substrate. The active-site Nucleophile is Cys-39. Gly-161–Ala-166 lines the NADP(+) pocket.

This sequence belongs to the glutamyl-tRNA reductase family. In terms of assembly, homodimer.

It catalyses the reaction (S)-4-amino-5-oxopentanoate + tRNA(Glu) + NADP(+) = L-glutamyl-tRNA(Glu) + NADPH + H(+). Its pathway is porphyrin-containing compound metabolism; protoporphyrin-IX biosynthesis; 5-aminolevulinate from L-glutamyl-tRNA(Glu): step 1/2. Its function is as follows. Catalyzes the NADPH-dependent reduction of glutamyl-tRNA(Glu) to glutamate 1-semialdehyde (GSA). This chain is Glutamyl-tRNA reductase, found in Methanococcus aeolicus (strain ATCC BAA-1280 / DSM 17508 / OCM 812 / Nankai-3).